The following is a 454-amino-acid chain: Bifunctional protein GlmU (454 aa).

The pyrophosphorylase stretch occupies residues 1-228 (MTLPLHVVIL…PQDVEGANDP (228 aa)). UDP-N-acetyl-alpha-D-glucosamine-binding positions include 10–13 (LAAG), Lys-24, Gln-76, 81–82 (GT), 103–105 (YGD), Gly-138, Glu-153, Asn-168, and Asn-226. Position 105 (Asp-105) interacts with Mg(2+). Asn-226 contributes to the Mg(2+) binding site. Residues 229-249 (WQLAQLERAWQLRAARALCLQ) form a linker region. Positions 250–454 (GVRMADPARV…IEGWERPKKK (205 aa)) are N-acetyltransferase. 2 residues coordinate UDP-N-acetyl-alpha-D-glucosamine: Arg-332 and Lys-350. His-362 serves as the catalytic Proton acceptor. UDP-N-acetyl-alpha-D-glucosamine-binding residues include Tyr-365 and Asn-376. Acetyl-CoA is bound by residues Ala-379, 385-386 (NY), Ser-404, Ala-422, and Arg-439.

It in the N-terminal section; belongs to the N-acetylglucosamine-1-phosphate uridyltransferase family. The protein in the C-terminal section; belongs to the transferase hexapeptide repeat family. Homotrimer. The cofactor is Mg(2+).

The protein localises to the cytoplasm. It carries out the reaction alpha-D-glucosamine 1-phosphate + acetyl-CoA = N-acetyl-alpha-D-glucosamine 1-phosphate + CoA + H(+). The catalysed reaction is N-acetyl-alpha-D-glucosamine 1-phosphate + UTP + H(+) = UDP-N-acetyl-alpha-D-glucosamine + diphosphate. Its pathway is nucleotide-sugar biosynthesis; UDP-N-acetyl-alpha-D-glucosamine biosynthesis; N-acetyl-alpha-D-glucosamine 1-phosphate from alpha-D-glucosamine 6-phosphate (route II): step 2/2. It functions in the pathway nucleotide-sugar biosynthesis; UDP-N-acetyl-alpha-D-glucosamine biosynthesis; UDP-N-acetyl-alpha-D-glucosamine from N-acetyl-alpha-D-glucosamine 1-phosphate: step 1/1. It participates in bacterial outer membrane biogenesis; LPS lipid A biosynthesis. Functionally, catalyzes the last two sequential reactions in the de novo biosynthetic pathway for UDP-N-acetylglucosamine (UDP-GlcNAc). The C-terminal domain catalyzes the transfer of acetyl group from acetyl coenzyme A to glucosamine-1-phosphate (GlcN-1-P) to produce N-acetylglucosamine-1-phosphate (GlcNAc-1-P), which is converted into UDP-GlcNAc by the transfer of uridine 5-monophosphate (from uridine 5-triphosphate), a reaction catalyzed by the N-terminal domain. The chain is Bifunctional protein GlmU from Xanthomonas campestris pv. campestris (strain 8004).